Reading from the N-terminus, the 118-residue chain is Basic phospholipase A2 nigroxin A (118 aa).

Intrachain disulfides connect Cys11–Cys70, Cys25–Cys117, Cys27–Cys43, Cys42–Cys98, Cys49–Cys91, Cys59–Cys84, and Cys77–Cys89. Residues Tyr26, Gly28, and Gly30 each contribute to the Ca(2+) site. Residue His46 is part of the active site. Residue Asp47 participates in Ca(2+) binding. Asp92 is an active-site residue.

It belongs to the phospholipase A2 family. Group I subfamily. D49 sub-subfamily. The cofactor is Ca(2+). In terms of tissue distribution, expressed by the venom gland.

It localises to the secreted. The catalysed reaction is a 1,2-diacyl-sn-glycero-3-phosphocholine + H2O = a 1-acyl-sn-glycero-3-phosphocholine + a fatty acid + H(+). Snake venom phospholipase A2 (PLA2) that has only a weak enzymatic activity. It has a myotoxic activity in vivo (dystrophic effect). PLA2 catalyzes the calcium-dependent hydrolysis of the 2-acyl groups in 3-sn-phosphoglycerides. The chain is Basic phospholipase A2 nigroxin A from Micrurus nigrocinctus (Central American coral snake).